Consider the following 161-residue polypeptide: uncharacterized protein (161 aa).

Interacts with ribosomes.

This is an uncharacterized protein from Saccharomyces cerevisiae (strain ATCC 204508 / S288c) (Baker's yeast).